The primary structure comprises 89 residues: MYILELLLKGNPAPIVVHQKEEEAANRAYQSVVNALQSGSPQSLELTCDRTGKKVFLLTGELCGVQMTTKSGGPGAPGTRPGFLAQLQG.

The segment at 69–89 is disordered; sequence TKSGGPGAPGTRPGFLAQLQG.

Belongs to the UPF0367 family.

The polypeptide is UPF0367 protein CYA_1023 (Synechococcus sp. (strain JA-3-3Ab) (Cyanobacteria bacterium Yellowstone A-Prime)).